The following is a 1296-amino-acid chain: Clustered mitochondria protein homolog (1296 aa).

A disordered region spans residues methionine 1–glutamate 31. Over residues glycine 8–glycine 26 the composition is skewed to basic and acidic residues. A Clu domain is found at arginine 333–leucine 575. Residues leucine 662–valine 689 adopt a coiled-coil conformation. 4 TPR repeats span residues alanine 970–valine 1003, cysteine 1012–isoleucine 1045, alanine 1096–tyrosine 1129, and alanine 1138–glutamine 1171. Residues glutamine 1242–glutamate 1274 are a coiled coil. Residues alanine 1261 to aspartate 1296 are disordered. The span at lysine 1263–glutamate 1276 shows a compositional bias: basic and acidic residues. Residues serine 1278–aspartate 1296 show a composition bias toward polar residues.

Belongs to the CLU family.

The protein localises to the cytoplasm. Its subcellular location is the cytoplasmic granule. MRNA-binding protein involved in proper cytoplasmic distribution of mitochondria. Specifically binds mRNAs of nuclear-encoded mitochondrial proteins in the cytoplasm and regulates transport or translation of these transcripts close to mitochondria, playing a role in mitochondrial biogenesis. The chain is Clustered mitochondria protein homolog from Xenopus tropicalis (Western clawed frog).